An 86-amino-acid polypeptide reads, in one-letter code: Large ribosomal subunit protein bL31 (86 aa).

Positions 65 to 86 (YGMGSADSATSKETKESKKSDK) are disordered. Over residues 74-86 (TSKETKESKKSDK) the composition is skewed to basic and acidic residues.

Belongs to the bacterial ribosomal protein bL31 family. Type A subfamily. As to quaternary structure, part of the 50S ribosomal subunit.

In terms of biological role, binds the 23S rRNA. The chain is Large ribosomal subunit protein bL31 from Prochlorococcus marinus subsp. pastoris (strain CCMP1986 / NIES-2087 / MED4).